The sequence spans 33 residues: Large ribosomal subunit protein eL28 (33 aa).

This sequence belongs to the eukaryotic ribosomal protein eL28 family. In terms of assembly, component of the large ribosomal subunit.

It localises to the cytoplasm. Component of the large ribosomal subunit. The ribosome is a large ribonucleoprotein complex responsible for the synthesis of proteins in the cell. In Xenopus laevis (African clawed frog), this protein is Large ribosomal subunit protein eL28 (rpl28).